We begin with the raw amino-acid sequence, 129 residues long: 4-amino-4-deoxychorismate mutase (129 aa).

The region spanning 16 to 107 is the Chorismate mutase domain; it reads AAATDPLDAL…ETCRLEDEWI (92 aa).

It carries out the reaction 4-amino-4-deoxychorismate = 4-amino-4-deoxyprephenate. Its pathway is antibiotic biosynthesis. Its function is as follows. Involved in pristinamycin I biosynthesis. Probably catalyzes the conversion of 4-amino-4-deoxychorismate to 4-amino-4-deoxyprephenate. The polypeptide is 4-amino-4-deoxychorismate mutase (Streptomyces pristinaespiralis).